The following is a 565-amino-acid chain: Glycine/sarcosine/dimethylglycine N-methyltransferase (565 aa).

Positions 1–10 (MTKSVDDLAR) are enriched in basic and acidic residues. A disordered region spans residues 1 to 34 (MTKSVDDLARGDQAGDEQDPVHREQQTFGDNPLE). S-adenosyl-L-methionine is bound by residues tyrosine 45, tryptophan 53, arginine 62, alanine 86, aspartate 107, 134–135 (DW), and leucine 152. Positions 154, 187, and 226 each coordinate substrate.

This sequence belongs to the class I-like SAM-binding methyltransferase superfamily. Glycine N-methyltransferase family. Monomer.

It carries out the reaction glycine + 2 S-adenosyl-L-methionine = N,N-dimethylglycine + 2 S-adenosyl-L-homocysteine + 2 H(+). The enzyme catalyses sarcosine + 2 S-adenosyl-L-methionine = glycine betaine + 2 S-adenosyl-L-homocysteine + 2 H(+). It catalyses the reaction glycine + S-adenosyl-L-methionine = sarcosine + S-adenosyl-L-homocysteine + H(+). The catalysed reaction is sarcosine + S-adenosyl-L-methionine = N,N-dimethylglycine + S-adenosyl-L-homocysteine + H(+). It carries out the reaction N,N-dimethylglycine + S-adenosyl-L-methionine = glycine betaine + S-adenosyl-L-homocysteine + H(+). Its pathway is amine and polyamine biosynthesis; betaine biosynthesis via glycine pathway; betaine from glycine: step 1/3. It participates in amine and polyamine biosynthesis; betaine biosynthesis via glycine pathway; betaine from glycine: step 2/3. It functions in the pathway amine and polyamine biosynthesis; betaine biosynthesis via glycine pathway; betaine from glycine: step 3/3. Catalyzes the methylation of glycine, sarcosine and dimethylglycine to sarcosine, dimethylglycine and betaine, respectively, with S-adenosylmethionine (AdoMet) acting as the methyl donor. Shows low level of activity on glycine when expressed in E.coli. In Actinopolyspora halophila, this protein is Glycine/sarcosine/dimethylglycine N-methyltransferase.